The primary structure comprises 1067 residues: Lon protease homolog, mitochondrial (1067 aa).

A mitochondrion-targeting transit peptide spans 1-36; that stretch reads MITRLSGACLRRSGAKRNWPREHLVHRSLLASFSTT. The segment covering 55–82 has biased composition (basic and acidic residues); that stretch reads KSKEPKDNKPLDNKNDPKKTHNEDESHT. Disordered regions lie at residues 55–142 and 262–314; these read KSKE…MPLN and IPPK…ESTP. Acidic residues predominate over residues 128–139; the sequence is FELGGEENEDEM. Positions 162–425 constitute a Lon N-terminal domain; it reads LLALPIARRP…KALYVLKKEL (264 aa). Over residues 293–311 the composition is skewed to basic and acidic residues; that stretch reads VKSDLKQDNGKEEPEKEVE. ATP is bound at residue 578-585; the sequence is GPPGVGKT. The segment at 791 to 820 is disordered; the sequence is NSKEKSTGKSGKKTSPQSSEDAANKEASSV. Positions 854–1040 constitute a Lon proteolytic domain; it reads TTPPGVVMGL…DDVFKRVFSN (187 aa). Catalysis depends on residues serine 946 and lysine 989.

It belongs to the peptidase S16 family. In terms of assembly, homohexamer or homoheptamer. Organized in a ring with a central cavity.

It is found in the mitochondrion matrix. It catalyses the reaction Hydrolysis of proteins in presence of ATP.. ATP-dependent serine protease that mediates the selective degradation of misfolded, unassembled or oxidatively damaged polypeptides as well as certain short-lived regulatory proteins in the mitochondrial matrix. May also have a chaperone function in the assembly of inner membrane protein complexes. Participates in the regulation of mitochondrial gene expression and in the maintenance of the integrity of the mitochondrial genome. Binds to mitochondrial DNA in a site-specific manner. The sequence is that of Lon protease homolog, mitochondrial (pim1) from Schizosaccharomyces pombe (strain 972 / ATCC 24843) (Fission yeast).